Reading from the N-terminus, the 2571-residue chain is Highly reducing polyketide synthase 19 (2571 aa).

The segment at 1 to 51 is disordered; the sequence is MSPIFLGDSEDAATCRCGPPSSPSPELSGTETALTSDSDGPELLNPGPQGP. Residues 27–38 show a composition bias toward polar residues; the sequence is LSGTETALTSDS. In terms of domain architecture, Ketosynthase family 3 (KS3) spans 51–485; the sequence is PEPIAIIGMG…GANAHCILES (435 aa). Residues cysteine 224, histidine 359, and histidine 398 each act as for beta-ketoacyl synthase activity in the active site. A malonyl-CoA:ACP transacylase (MAT) domain region spans residues 609–932; it reads VFTGQGAQWA…PYNSALLRGK (324 aa). Catalysis depends on serine 701, which acts as the For malonyltransferase activity. The interval 1019–1163 is N-terminal hotdog fold; that stretch reads HDLLGSRVPG…GLVKLTQNED (145 aa). Residues 1019 to 1340 form a dehydratase (DH) domain region; the sequence is HDLLGSRVPG…SGCRMVPYSS (322 aa). The PKS/mFAS DH domain maps to 1019-1344; it reads HDLLGSRVPG…MVPYSSGTAV (326 aa). Histidine 1051 functions as the Proton acceptor; for dehydratase activity in the catalytic mechanism. The C-terminal hotdog fold stretch occupies residues 1177–1344; the sequence is MEQSAPRTWY…MVPYSSGTAV (168 aa). The active-site Proton donor; for dehydratase activity is aspartate 1241. An enoyl reductase (ER) domain region spans residues 1800 to 2140; that stretch reads NMSDAFVFTR…AFRALSGSTT (341 aa). The interval 2177–2355 is ketoreductase (KR) domain; that stretch reads SYLLVGCLGG…ATSVGLGMIS (179 aa). One can recognise a Carrier domain in the interval 2490-2568; sequence AVAAQALELV…MLSELIAGKL (79 aa). Residue serine 2527 is modified to O-(pantetheine 4'-phosphoryl)serine.

Its pathway is polyketide biosynthesis. Functionally, highly reducing polyketide synthase; part of the gene cluster that mediates the biosynthesis of pyriculol and pyriculariol, two heptaketides that induce lesion formation upon application on rice leaves but are dispensable for pathogenicity. The highly reducing polyketide synthase synthesizes the heptaketide backbone of pyriculol and pyriculariol. Pyriculol and pyriculariol contain several hydroxyl moieties and double bonds, so it can be assumed that several reduction steps occur during biosynthesis. These reactions could be executed by PKS19 itself or partly by the tailoring enzymes OXR1, PXR2, RED1, RED2 or RED3, identified within the cluster. The FAD-linked oxidoreductase OXR1 is the only tailoring enzyme for which the function has been determined yet, and is involved in the oxidation of dihydropyriculol and dihydropyriculariol into pyriculol and pyriculariol, respectively. The polypeptide is Highly reducing polyketide synthase 19 (Pyricularia oryzae (strain 70-15 / ATCC MYA-4617 / FGSC 8958) (Rice blast fungus)).